The sequence spans 569 residues: Interleukin-1 receptor type 1 (569 aa).

Residues 1–17 (MKVLLRLICFIALLISS) form the signal peptide. The Extracellular segment spans residues 18–336 (LEADKCKERE…LIYPVTNFQK (319 aa)). 4 cysteine pairs are disulfide-bonded: cysteine 23–cysteine 104, cysteine 44–cysteine 96, cysteine 121–cysteine 164, and cysteine 142–cysteine 196. 3 Ig-like C2-type domains span residues 23–110 (CKER…IKIS), 118–210 (PNLC…YPIT), and 226–328 (PVIV…IQLI). Asparagine 100 carries N-linked (GlcNAc...) asparagine glycosylation. Asparagine 193, asparagine 233, asparagine 249, asparagine 263, and asparagine 297 each carry an N-linked (GlcNAc...) asparagine glycan. A disulfide bond links cysteine 248 and cysteine 312. Residues 337 to 356 (HMIGICVTLTVIIVCSVFIY) form a helical membrane-spanning segment. The Cytoplasmic segment spans residues 357 to 569 (KIFKIDIVLW…LQREAHVPLG (213 aa)). A TIR domain is found at 383–538 (KTYDAYILYP…RFWKNVRYHM (156 aa)). Residue glutamate 470 is part of the active site. Phosphotyrosine is present on tyrosine 496. Residues 540–569 (VQRRSPSSKHQLLSPATKEKLQREAHVPLG) form a disordered region. Residues 556–569 (TKEKLQREAHVPLG) show a composition bias toward basic and acidic residues.

This sequence belongs to the interleukin-1 receptor family. The interleukin-1 receptor complex is a heterodimer of IL1R1 and IL1RAP. Interacts with PIK3R1. Interacts with IL1A. In terms of processing, a soluble form (sIL1R1) is probably produced by proteolytic cleavage at the cell surface (shedding). Post-translationally, rapidly phosphorylated on Tyr-496 in response to IL-1, which creates a SH2 binding site for the PI 3-kinase regulatory subunit PIK3R1. In terms of tissue distribution, expressed in T-helper cell subsets. Preferentially expressed in T-helper 1 (Th1) cells.

It is found in the membrane. Its subcellular location is the cell membrane. The protein localises to the secreted. It carries out the reaction NAD(+) + H2O = ADP-D-ribose + nicotinamide + H(+). In terms of biological role, receptor for IL1A, IL1B and IL1RN. After binding to interleukin-1 associates with the coreceptor IL1RAP to form the high affinity interleukin-1 receptor complex which mediates interleukin-1-dependent activation of NF-kappa-B, MAPK and other pathways. Signaling involves the recruitment of adapter molecules such as TOLLIP, MYD88, and IRAK1 or IRAK2 via the respective TIR domains of the receptor/coreceptor subunits. Binds ligands with comparable affinity and binding of antagonist IL1RN prevents association with IL1RAP to form a signaling complex. Involved in IL1B-mediated costimulation of IFNG production from T-helper 1 (Th1) cells. The chain is Interleukin-1 receptor type 1 (IL1R1) from Homo sapiens (Human).